Here is a 282-residue protein sequence, read N- to C-terminus: V-set domain-containing T-cell activation inhibitor 1 (282 aa).

A signal peptide spans 1–24 (MASLGQIIFWSIINVIIILAGAIV). Ig-like V-type domains lie at 35 to 144 (HFIT…ANLE) and 153 to 241 (PEIN…IKVT). 2 disulfide bridges follow: C56-C130 and C168-C225. N-linked (GlcNAc...) asparagine glycosylation occurs at N216. Residue G257 is the site of GPI-anchor amidated glycine attachment. The propeptide at 258-282 (PSPCVSSVSAAGWALLSLSCCLMLR) is removed in mature form.

It belongs to the immunoglobulin superfamily. BTN/MOG family. In terms of processing, N-glycosylated.

Its subcellular location is the cell membrane. Functionally, negatively regulates T-cell-mediated immune response by inhibiting T-cell activation, proliferation, cytokine production and development of cytotoxicity. When expressed on the cell surface of tumor macrophages, plays an important role, together with regulatory T-cells (Treg), in the suppression of tumor-associated antigen-specific T-cell immunity. Involved in promoting epithelial cell transformation. This Rattus norvegicus (Rat) protein is V-set domain-containing T-cell activation inhibitor 1.